The sequence spans 110 residues: Flowering-promoting factor 1 (110 aa).

Belongs to the FPF1 family.

Its function is as follows. Modulates the competence to flowering of apical meristems. Involved in a GA-dependent response in apical meristems during the transition to flowering. The polypeptide is Flowering-promoting factor 1 (FPF1) (Arabidopsis thaliana (Mouse-ear cress)).